The following is a 127-amino-acid chain: Ribonuclease P protein component (127 aa).

The protein belongs to the RnpA family. In terms of assembly, consists of a catalytic RNA component (M1 or rnpB) and a protein subunit.

The catalysed reaction is Endonucleolytic cleavage of RNA, removing 5'-extranucleotides from tRNA precursor.. RNaseP catalyzes the removal of the 5'-leader sequence from pre-tRNA to produce the mature 5'-terminus. It can also cleave other RNA substrates such as 4.5S RNA. The protein component plays an auxiliary but essential role in vivo by binding to the 5'-leader sequence and broadening the substrate specificity of the ribozyme. The sequence is that of Ribonuclease P protein component from Synechococcus sp. (strain RCC307).